The following is a 375-amino-acid chain: G-protein coupled estrogen receptor 1 (375 aa).

Residue M1 is modified to N-acetylmethionine. At 1 to 62 the chain is on the extracellular side; that stretch reads MDATTPAQTV…QQYVIALFLS (62 aa). Residues N32 and N44 are each glycosylated (N-linked (GlcNAc...) asparagine). Residues 63–84 form a helical membrane-spanning segment; the sequence is CLYTIFLFPIGFVGNILILVVN. The Cytoplasmic segment spans residues 85–96; that stretch reads ISFREKMTIPDL. Residues 97–120 traverse the membrane as a helical segment; sequence YFINLAAADLILVADSLIEVFNLD. The Extracellular segment spans residues 121–132; that stretch reads EQYYDIAVLCTF. The cysteines at positions 130 and 207 are disulfide-linked. Residues 133 to 153 traverse the membrane as a helical segment; it reads MSLFLQINMYSSVFFLTWMSF. Residues 154 to 175 are Cytoplasmic-facing; the sequence is DRYLALAKAMRCGLFRTKHHAR. A helical transmembrane segment spans residues 176–194; the sequence is LSCGLIWMASVSATLVPFT. Over 195–220 the chain is Extracellular; sequence AVHLRHTEEACFCFADVREVQWLEVT. Residues 221–236 traverse the membrane as a helical segment; the sequence is LGFIMPFAIIGLCYSL. At 237–259 the chain is on the cytoplasmic side; it reads IVRALIRAHRHRGLRPRRQKALR. Residues 260-280 form a helical membrane-spanning segment; that stretch reads MIFAVVLVFFICWLPENVFIS. Residues 281-306 are Extracellular-facing; that stretch reads VHLLQWTQPGDTPCKQSFRHAYPLTG. Residues 307–327 traverse the membrane as a helical segment; it reads HIVNLAAFSNSCLNPLIYSFL. Residues 328–375 lie on the Cytoplasmic side of the membrane; that stretch reads GETFRDKLRLYVEQKTSLPALNRFCHATLKAVIPDSTEQSEVRFSSAV.

The protein belongs to the G-protein coupled receptor 1 family. Interacts with RAMP3; the interaction confers proper subcellular localization and function in cardioprotection. Interacts with KRT7 and KRT8. Interacts with EGFR; the interaction increases after agonist-induced stimulation in cancer-associated fibroblasts (CAF). Interacts with EGFR and ESR1. Interacts (via C-terminus tail motif) with DLG4 (via N-terminus tandem pair of PDZ domains); the interaction is direct and induces the increase of GPER1 protein levels residing at the plasma membrane surface in a estradiol-independent manner. Homodimer. Heterodimer; heterodimerizes with other G-protein-coupled receptor (GPCRs) like CRHR1, HTR1A and PAQR8. Ubiquitinated; ubiquitination occurs at the plasma membrane and leads to proteasome-mediated degradation. In terms of processing, N-glycosylated. As to expression, expressed in brain, heart, spleen, preadipocytes, mature adipocytes and primary hippocampal neurons. Expressed in neurons of the hippocampus, hypothalamic paraventricular nucleus (PVH), supraoptic nucleus (SON) and the median eminence. Expressed in the nucleus ambiguous (at protein level). Expressed in brain, pituitary gland, adrenal medulla, renal pelvis, ovary, endothelial cells, visceral fat tissues and islets of Langerhans.

It localises to the nucleus. The protein resides in the cytoplasm. The protein localises to the perinuclear region. It is found in the cytoskeleton. Its subcellular location is the cell membrane. It localises to the endoplasmic reticulum membrane. The protein resides in the golgi apparatus membrane. The protein localises to the cell projection. It is found in the dendrite. Its subcellular location is the cytoplasmic vesicle membrane. It localises to the early endosome. The protein resides in the recycling endosome. The protein localises to the golgi apparatus. It is found in the trans-Golgi network. Its subcellular location is the dendritic spine membrane. It localises to the axon. The protein resides in the postsynaptic density. The protein localises to the mitochondrion membrane. In terms of biological role, G-protein coupled estrogen receptor that binds to 17-beta-estradiol (E2) with high affinity, leading to rapid and transient activation of numerous intracellular signaling pathways. Stimulates cAMP production, calcium mobilization and tyrosine kinase Src inducing the release of heparin-bound epidermal growth factor (HB-EGF) and subsequent transactivation of the epidermal growth factor receptor (EGFR), activating downstream signaling pathways such as PI3K/Akt and ERK/MAPK. Mediates pleiotropic functions among others in the cardiovascular, endocrine, reproductive, immune and central nervous systems. Has a role in cardioprotection by reducing cardiac hypertrophy and perivascular fibrosis in a RAMP3-dependent manner. Regulates arterial blood pressure by stimulating vasodilation and reducing vascular smooth muscle and microvascular endothelial cell proliferation. Plays a role in blood glucose homeostasis contributing to the insulin secretion response by pancreatic beta cells. Triggers mitochondrial apoptosis during pachytene spermatocyte differentiation. Stimulates uterine epithelial cell proliferation. Enhances uterine contractility in response to oxytocin. Contributes to thymic atrophy by inducing apoptosis. Attenuates TNF-mediated endothelial expression of leukocyte adhesion molecules. Promotes neuritogenesis in developing hippocampal neurons. Plays a role in acute neuroprotection against NMDA-induced excitotoxic neuronal death. Increases firing activity and intracellular calcium oscillations in luteinizing hormone-releasing hormone (LHRH) neurons. Inhibits early osteoblast proliferation at growth plate during skeletal development. Inhibits mature adipocyte differentiation and lipid accumulation. Involved in the recruitment of beta-arrestin 2 ARRB2 at the plasma membrane in epithelial cells. Also functions as a receptor for aldosterone mediating rapid regulation of vascular contractibility through the PI3K/ERK signaling pathway. Involved in cancer progression regulation. Stimulates cancer-associated fibroblast (CAF) proliferation by a rapid genomic response through the EGFR/ERK transduction pathway. Associated with EGFR, may act as a transcription factor activating growth regulatory genes (c-fos, cyclin D1). Promotes integrin alpha-5/beta-1 and fibronectin (FN) matrix assembly in breast cancer cells. This is G-protein coupled estrogen receptor 1 (Gper1) from Mus musculus (Mouse).